The chain runs to 209 residues: Large ribosomal subunit protein uL3 (209 aa).

Gln-150 bears the N5-methylglutamine mark.

It belongs to the universal ribosomal protein uL3 family. In terms of assembly, part of the 50S ribosomal subunit. Forms a cluster with proteins L14 and L19. In terms of processing, methylated by PrmB.

In terms of biological role, one of the primary rRNA binding proteins, it binds directly near the 3'-end of the 23S rRNA, where it nucleates assembly of the 50S subunit. The sequence is that of Large ribosomal subunit protein uL3 from Buchnera aphidicola subsp. Acyrthosiphon pisum (strain 5A).